We begin with the raw amino-acid sequence, 930 residues long: Isoleucine--tRNA ligase (930 aa).

The 'HIGH' region motif lies at 57–67 (PYANGHLHIGH). L-isoleucyl-5'-AMP is bound at residue E573. A 'KMSKS' region motif is present at residues 614-618 (KMSKS). K617 provides a ligand contact to ATP. The Zn(2+) site is built by C902, C905, C918, and C921.

This sequence belongs to the class-I aminoacyl-tRNA synthetase family. IleS type 1 subfamily. As to quaternary structure, monomer. The cofactor is Zn(2+).

Its subcellular location is the cytoplasm. The enzyme catalyses tRNA(Ile) + L-isoleucine + ATP = L-isoleucyl-tRNA(Ile) + AMP + diphosphate. Functionally, catalyzes the attachment of isoleucine to tRNA(Ile). As IleRS can inadvertently accommodate and process structurally similar amino acids such as valine, to avoid such errors it has two additional distinct tRNA(Ile)-dependent editing activities. One activity is designated as 'pretransfer' editing and involves the hydrolysis of activated Val-AMP. The other activity is designated 'posttransfer' editing and involves deacylation of mischarged Val-tRNA(Ile). The polypeptide is Isoleucine--tRNA ligase (Helicobacter hepaticus (strain ATCC 51449 / 3B1)).